A 192-amino-acid polypeptide reads, in one-letter code: Protein GrpE (192 aa).

The protein belongs to the GrpE family. As to quaternary structure, homodimer.

The protein localises to the cytoplasm. Functionally, participates actively in the response to hyperosmotic and heat shock by preventing the aggregation of stress-denatured proteins, in association with DnaK and GrpE. It is the nucleotide exchange factor for DnaK and may function as a thermosensor. Unfolded proteins bind initially to DnaJ; upon interaction with the DnaJ-bound protein, DnaK hydrolyzes its bound ATP, resulting in the formation of a stable complex. GrpE releases ADP from DnaK; ATP binding to DnaK triggers the release of the substrate protein, thus completing the reaction cycle. Several rounds of ATP-dependent interactions between DnaJ, DnaK and GrpE are required for fully efficient folding. The chain is Protein GrpE from Neisseria gonorrhoeae (strain NCCP11945).